The chain runs to 456 residues: Bifunctional protein GlmU (456 aa).

A pyrophosphorylase region spans residues 1 to 229 (MSTSPLSVVI…LSEVEGVNNR (229 aa)). UDP-N-acetyl-alpha-D-glucosamine contacts are provided by residues 11–14 (LAAG), lysine 25, glutamine 76, 81–82 (GT), 103–105 (YGD), glycine 140, glutamate 154, asparagine 169, and asparagine 227. Aspartate 105 lines the Mg(2+) pocket. Mg(2+) is bound at residue asparagine 227. The tract at residues 230 to 250 (LQLSALERAYQQQQAQRLLLA) is linker. The interval 251-456 (GVMLTDPARF…SGWERPVKKK (206 aa)) is N-acetyltransferase. Positions 333 and 351 each coordinate UDP-N-acetyl-alpha-D-glucosamine. Histidine 363 (proton acceptor) is an active-site residue. UDP-N-acetyl-alpha-D-glucosamine-binding residues include tyrosine 366 and asparagine 377. Acetyl-CoA contacts are provided by residues alanine 380, 386–387 (NY), serine 405, alanine 423, and arginine 440.

It in the N-terminal section; belongs to the N-acetylglucosamine-1-phosphate uridyltransferase family. In the C-terminal section; belongs to the transferase hexapeptide repeat family. Homotrimer. Mg(2+) serves as cofactor.

It is found in the cytoplasm. It carries out the reaction alpha-D-glucosamine 1-phosphate + acetyl-CoA = N-acetyl-alpha-D-glucosamine 1-phosphate + CoA + H(+). The catalysed reaction is N-acetyl-alpha-D-glucosamine 1-phosphate + UTP + H(+) = UDP-N-acetyl-alpha-D-glucosamine + diphosphate. It participates in nucleotide-sugar biosynthesis; UDP-N-acetyl-alpha-D-glucosamine biosynthesis; N-acetyl-alpha-D-glucosamine 1-phosphate from alpha-D-glucosamine 6-phosphate (route II): step 2/2. Its pathway is nucleotide-sugar biosynthesis; UDP-N-acetyl-alpha-D-glucosamine biosynthesis; UDP-N-acetyl-alpha-D-glucosamine from N-acetyl-alpha-D-glucosamine 1-phosphate: step 1/1. The protein operates within bacterial outer membrane biogenesis; LPS lipid A biosynthesis. In terms of biological role, catalyzes the last two sequential reactions in the de novo biosynthetic pathway for UDP-N-acetylglucosamine (UDP-GlcNAc). The C-terminal domain catalyzes the transfer of acetyl group from acetyl coenzyme A to glucosamine-1-phosphate (GlcN-1-P) to produce N-acetylglucosamine-1-phosphate (GlcNAc-1-P), which is converted into UDP-GlcNAc by the transfer of uridine 5-monophosphate (from uridine 5-triphosphate), a reaction catalyzed by the N-terminal domain. The chain is Bifunctional protein GlmU from Edwardsiella ictaluri (strain 93-146).